Consider the following 153-residue polypeptide: Endoribonuclease YbeY (153 aa).

Zn(2+)-binding residues include H114, H118, and H124.

This sequence belongs to the endoribonuclease YbeY family. Zn(2+) is required as a cofactor.

Its subcellular location is the cytoplasm. In terms of biological role, single strand-specific metallo-endoribonuclease involved in late-stage 70S ribosome quality control and in maturation of the 3' terminus of the 16S rRNA. This Shewanella baltica (strain OS185) protein is Endoribonuclease YbeY.